A 410-amino-acid chain; its full sequence is Serine hydroxymethyltransferase (410 aa).

Residues Leu-119 and 123 to 125 (GHL) contribute to the (6S)-5,6,7,8-tetrahydrofolate site. Position 228 is an N6-(pyridoxal phosphate)lysine (Lys-228). 351-353 (SPF) is a binding site for (6S)-5,6,7,8-tetrahydrofolate.

The protein belongs to the SHMT family. In terms of assembly, homodimer. Pyridoxal 5'-phosphate is required as a cofactor.

Its subcellular location is the cytoplasm. The catalysed reaction is (6R)-5,10-methylene-5,6,7,8-tetrahydrofolate + glycine + H2O = (6S)-5,6,7,8-tetrahydrofolate + L-serine. It participates in one-carbon metabolism; tetrahydrofolate interconversion. Its pathway is amino-acid biosynthesis; glycine biosynthesis; glycine from L-serine: step 1/1. Functionally, catalyzes the reversible interconversion of serine and glycine with tetrahydrofolate (THF) serving as the one-carbon carrier. This reaction serves as the major source of one-carbon groups required for the biosynthesis of purines, thymidylate, methionine, and other important biomolecules. Also exhibits THF-independent aldolase activity toward beta-hydroxyamino acids, producing glycine and aldehydes, via a retro-aldol mechanism. The protein is Serine hydroxymethyltransferase of Alkaliphilus oremlandii (strain OhILAs) (Clostridium oremlandii (strain OhILAs)).